The chain runs to 65 residues: Large ribosomal subunit protein bL35 (65 aa).

The segment covering Met1 to Val16 has biased composition (basic residues). Residues Met1–Gly25 are disordered.

The protein belongs to the bacterial ribosomal protein bL35 family.

This is Large ribosomal subunit protein bL35 from Herminiimonas arsenicoxydans.